The sequence spans 644 residues: Exoribonuclease 2 (644 aa).

The RNB domain occupies 189–516; sequence RQDLTALNFV…NHRLLKAVIK (328 aa). Residues 561-643 enclose the S1 motif domain; it reads NTRFAAEIID…ETRSIIARPA (83 aa).

The protein belongs to the RNR ribonuclease family. RNase II subfamily.

The protein localises to the cytoplasm. It carries out the reaction Exonucleolytic cleavage in the 3'- to 5'-direction to yield nucleoside 5'-phosphates.. Its function is as follows. Involved in mRNA degradation. Hydrolyzes single-stranded polyribonucleotides processively in the 3' to 5' direction. The polypeptide is Exoribonuclease 2 (Salmonella newport (strain SL254)).